Reading from the N-terminus, the 904-residue chain is MNEYRSSLVFATPDVPLRDDVRRLGALVGDLLAEQVSADFLEEIERIRTTAIARRESDTPPAGLLSLLEGREPRAAEALVRAFSTYFQVVNIAERVHRIRRRRDYQRSGTDTPQPEGLHDALRRLKAQGVTLDELSEWLPRIDVEPVFTAHPTEAVRRALLEKEQLMVASLVDNLDGMRTPNERATDAARFRMALTASWQTADSSPVRPTVEDEREHVGFYLTQVLYRVIPVMYETLEHAIEETYGSTLALPRLLRFGTWVGGDMDGNPNVDAHTIAGTLDAQRRAVLDRYLNELWQLASLLSQSTTLVAVSPALSAQLERYQALLPDAAARSRPRHGDMPYRLLNDLMRARLQATLDDADGAYAAPAELEHDLQLILDSLQANKGLHAGWFAVRRLLWRVRSFGFHLARLDVRQESSVHARAVADALGQADWDSQDATHRAGLLGPYASGEQALPQVDDEGNARLDAVFAALADARTRHGADALGSYIISMAHNRADVLTVLALARRGGLVDDAGAVPLDIVPLFETVDDLRGGTGTVQDLLADPVYRQHLRARGDTQMVMLGYSDSGKDGGIAASRWGLQRAQVELLEAAAELGVRLTFFHGRGGSIVRGGGKTTRALDAAPRGSVDGRLRVTEQGEVIHRKYGIRALALRSLEQMTGAVLLSSLRPRAPEPREDAWRPVMDLVAERSTVAYRGFVGAPDFMQYFRLATPIDVIERMTLGSRPSRRLGQDAALSNLRAIPWVFAWSQARAVIPGWYGVGSGLQAAVEAGHEDSLREMAQDWPFFRTFLDDIAMVLSKGDLNIAELFSRLAGPLHARFFPRIRDELALTKHWVKTLLGQRSLLQHDPRLALSIRLRNPYIDPISVLQVDLLQRWRATDGEDEELLRALVACVNGVAQGVQNTG.

Residues His151 and Lys570 contribute to the active site.

This sequence belongs to the PEPCase type 1 family. It depends on Mg(2+) as a cofactor.

It catalyses the reaction oxaloacetate + phosphate = phosphoenolpyruvate + hydrogencarbonate. Forms oxaloacetate, a four-carbon dicarboxylic acid source for the tricarboxylic acid cycle. The polypeptide is Phosphoenolpyruvate carboxylase (Xanthomonas campestris pv. campestris (strain 8004)).